Consider the following 668-residue polypeptide: Major S-layer protein (668 aa).

Positions 1 to 24 (MKRFAAVTLAALMLLTVFASAASA) are cleaved as a signal peptide. 10 N-linked (GlcNAc...) asparagine glycosylation sites follow: Asn-36, Asn-65, Asn-111, Asn-265, Asn-583, Asn-596, Asn-602, Asn-608, Asn-617, and Asn-635. A disordered region spans residues 584–650 (ETTSITKPDE…ESNGSPGFGV (67 aa)). The segment covering 596-611 (NETVSDNETMPDNTSS) has biased composition (polar residues). The segment covering 631–641 (EPTDNETEPDE) has biased composition (acidic residues). Residues 644–664 (GSPGFGVVLGLAGLLGVVYLV) traverse the membrane as a helical segment.

This sequence belongs to the Methanosarcinales S-layer protein family. Post-translationally, glycosylated.

The protein localises to the secreted. Its subcellular location is the cell wall. The protein resides in the S-layer. It is found in the cell membrane. S-layer protein. The S-layer is a paracrystalline mono-layered assembly of proteins which coat the surface of the cell. This is Major S-layer protein from Methanosarcina barkeri (strain Fusaro / DSM 804).